A 136-amino-acid chain; its full sequence is Secreted RxLR effector protein 63 (136 aa).

The signal sequence occupies residues 1 to 21 (MQRFPYSLLLLLLSATNRSRR). The RxLR signature appears at 43–46 (RMLR).

The protein belongs to the RxLR effector family.

The protein resides in the secreted. It localises to the host nucleus. Effector that partially suppresses the tobacco programmed cell death induced by cell death-inducing proteins. In Plasmopara viticola (Downy mildew of grapevine), this protein is Secreted RxLR effector protein 63.